The sequence spans 309 residues: Nudix hydrolase 14, chloroplastic (309 aa).

Residues 1-60 (MAGFTLLPSRLLAFPSRALPRRLHHHHAKLILRCKMSSSSSSLTQSITLPSQPNEPVLVS) constitute a chloroplast transit peptide. The Nudix hydrolase domain maps to 139 to 292 (ARGPAVAVLI…KVLMSIGLYE (154 aa)). The Nudix box motif lies at 179-200 (MLDDDKGDFVGTAVREVEEEIG). Glu194 and Glu198 together coordinate Mg(2+).

This sequence belongs to the Nudix hydrolase family. Homodimer. Requires Mg(2+) as cofactor. Mn(2+) is required as a cofactor. In terms of tissue distribution, expressed in roots, leaves, stems and inflorescences.

The protein localises to the plastid. Its subcellular location is the chloroplast. The enzyme catalyses ADP-sugar + H2O = AMP + alpha-D-aldose 1-phosphate.. Mediates the hydrolysis of some nucleoside diphosphate derivatives. Can use ADP-glucose, ADP-mannose and ADP-ribose as substrates. Regulates the intracellular ADP-glucose levels linked to starch biosynthesis. The chain is Nudix hydrolase 14, chloroplastic (NUDT14) from Arabidopsis thaliana (Mouse-ear cress).